The sequence spans 200 residues: Holliday junction branch migration complex subunit RuvA (200 aa).

Positions 1–63 (MYAYVKGKLT…EDAQLLYGFS (63 aa)) are domain I. Positions 64–142 (SEEEKDMFLS…ITEEDSDSLL (79 aa)) are domain II. The flexible linker stretch occupies residues 143–149 (QVDATST). Positions 150 to 200 (VQDQFVQEAMLALEALGYSKRELAKVEKTLNKNKYDSVDEAVKAGLQLVVS) are domain III.

This sequence belongs to the RuvA family. As to quaternary structure, homotetramer. Forms an RuvA(8)-RuvB(12)-Holliday junction (HJ) complex. HJ DNA is sandwiched between 2 RuvA tetramers; dsDNA enters through RuvA and exits via RuvB. An RuvB hexamer assembles on each DNA strand where it exits the tetramer. Each RuvB hexamer is contacted by two RuvA subunits (via domain III) on 2 adjacent RuvB subunits; this complex drives branch migration. In the full resolvosome a probable DNA-RuvA(4)-RuvB(12)-RuvC(2) complex forms which resolves the HJ.

The protein resides in the cytoplasm. Its function is as follows. The RuvA-RuvB-RuvC complex processes Holliday junction (HJ) DNA during genetic recombination and DNA repair, while the RuvA-RuvB complex plays an important role in the rescue of blocked DNA replication forks via replication fork reversal (RFR). RuvA specifically binds to HJ cruciform DNA, conferring on it an open structure. The RuvB hexamer acts as an ATP-dependent pump, pulling dsDNA into and through the RuvAB complex. HJ branch migration allows RuvC to scan DNA until it finds its consensus sequence, where it cleaves and resolves the cruciform DNA. The chain is Holliday junction branch migration complex subunit RuvA from Staphylococcus aureus (strain Mu3 / ATCC 700698).